A 456-amino-acid polypeptide reads, in one-letter code: uncharacterized protein (456 aa).

Residues 3–61 enclose the TRAM domain; that stretch reads LMRKNETREFLIEDIEFPAVGVAFYNDKKVYIKGAVPGQKVLARVSKVRREKIEAKLKE. The [4Fe-4S] cluster site is built by Cys74, Cys80, Cys83, and Cys163. Residues Gln289, Tyr318, Glu339, and Asp384 each contribute to the S-adenosyl-L-methionine site. The active-site Nucleophile is the Cys411.

The protein belongs to the class I-like SAM-binding methyltransferase superfamily. RNA M5U methyltransferase family.

This is an uncharacterized protein from Clostridium acetobutylicum (strain ATCC 824 / DSM 792 / JCM 1419 / IAM 19013 / LMG 5710 / NBRC 13948 / NRRL B-527 / VKM B-1787 / 2291 / W).